The chain runs to 102 residues: Small ribosomal subunit protein uS10 (102 aa).

This sequence belongs to the universal ribosomal protein uS10 family. In terms of assembly, part of the 30S ribosomal subunit.

Its function is as follows. Involved in the binding of tRNA to the ribosomes. The protein is Small ribosomal subunit protein uS10 of Streptococcus equi subsp. zooepidemicus (strain MGCS10565).